Reading from the N-terminus, the 673-residue chain is Ribonucleoprotein PTB-binding 2 (673 aa).

Residues 1 to 17 (MAARGGGAGGAGSGSGP) are compositionally biased toward gly residues. A disordered region spans residues 1–34 (MAARGGGAGGAGSGSGPSAGTAGEAAEPALRPGE). Residues 18–29 (SAGTAGEAAEPA) show a composition bias toward low complexity. RRM domains are found at residues 58 to 129 (RKIL…LQPT), 131 to 209 (ALLC…WMDV), and 220 to 298 (KCLC…FCAP). The segment at 481 to 549 (QLPAGQAGPG…KGTEVASKNQ (69 aa)) is disordered. The span at 499 to 512 (SASVSISEASFSGS) shows a compositional bias: low complexity. A compositionally biased stretch (polar residues) spans 529–549 (TGNQKTPQSQPKGTEVASKNQ).

Interacts with PTBP1 and RAVER1. Expressed throughout embryogenesis. Detected at low levels in adult lung, brain and kidney, but not in the other tissues tested.

The protein resides in the nucleus. The protein localises to the cytoplasm. In terms of biological role, may bind single-stranded nucleic acids. This chain is Ribonucleoprotein PTB-binding 2 (Raver2), found in Mus musculus (Mouse).